The primary structure comprises 117 residues: DNA-directed RNA polymerase subunit omega (117 aa).

It belongs to the RNA polymerase subunit omega family. In terms of assembly, the RNAP catalytic core consists of 2 alpha, 1 beta, 1 beta' and 1 omega subunit. When a sigma factor is associated with the core the holoenzyme is formed, which can initiate transcription.

The catalysed reaction is RNA(n) + a ribonucleoside 5'-triphosphate = RNA(n+1) + diphosphate. Promotes RNA polymerase assembly. Latches the N- and C-terminal regions of the beta' subunit thereby facilitating its interaction with the beta and alpha subunits. In Cereibacter sphaeroides (strain ATCC 17029 / ATH 2.4.9) (Rhodobacter sphaeroides), this protein is DNA-directed RNA polymerase subunit omega.